Consider the following 326-residue polypeptide: Neuferricin homolog (326 aa).

A signal peptide spans 1–34 (MDKNRRRTDDAGLMTKTLAGIAALVFFLSFICSS). Residues 98-197 (KHVFTPEQLH…KEYPLVGVVA (100 aa)) form the Cytochrome b5 heme-binding domain.

Belongs to the cytochrome b5 family. MAPR subfamily.

The protein localises to the secreted. In terms of biological role, heme-binding protein. This Caenorhabditis elegans protein is Neuferricin homolog (tag-131).